The following is a 358-amino-acid chain: Alanine racemase (358 aa).

Lysine 35 functions as the Proton acceptor; specific for D-alanine in the catalytic mechanism. Lysine 35 bears the N6-(pyridoxal phosphate)lysine mark. Substrate is bound at residue arginine 130. The Proton acceptor; specific for L-alanine role is filled by tyrosine 255. Methionine 303 provides a ligand contact to substrate.

This sequence belongs to the alanine racemase family. Pyridoxal 5'-phosphate serves as cofactor.

The catalysed reaction is L-alanine = D-alanine. The protein operates within amino-acid biosynthesis; D-alanine biosynthesis; D-alanine from L-alanine: step 1/1. Functionally, catalyzes the interconversion of L-alanine and D-alanine. May also act on other amino acids. This chain is Alanine racemase (alr), found in Shewanella oneidensis (strain ATCC 700550 / JCM 31522 / CIP 106686 / LMG 19005 / NCIMB 14063 / MR-1).